We begin with the raw amino-acid sequence, 634 residues long: Chaperone protein dnaK2 (634 aa).

A Phosphothreonine; by autocatalysis modification is found at threonine 197. Over residues 601–623 the composition is skewed to low complexity; it reads GAAAAESGADAGAAGAGDSSSGD. The tract at residues 601–634 is disordered; sequence GAAAAESGADAGAAGAGDSSSGDDVIDAEFTESK. Residues 624-634 are compositionally biased toward acidic residues; it reads DVIDAEFTESK.

It belongs to the heat shock protein 70 family.

Functionally, acts as a chaperone. This Prochlorococcus marinus (strain MIT 9313) protein is Chaperone protein dnaK2 (dnaK2).